A 323-amino-acid polypeptide reads, in one-letter code: Aldo-keto reductase family 1 member C21 (323 aa).

NADP(+) is bound at residue 20–24 (GFGTA). Lys31 lines the substrate pocket. Asp50 is an NADP(+) binding site. Tyr55 functions as the Proton donor in the catalytic mechanism. His117 is a substrate binding site. NADP(+) is bound by residues 166–167 (SN), Gln190, 216–224 (YGVLGTQRY), and 270–280 (TSLKEERIKEN).

The protein belongs to the aldo/keto reductase family. In terms of assembly, monomer. In terms of tissue distribution, detected in kidney and brain.

The protein localises to the cytoplasm. The catalysed reaction is androsterone + NADP(+) = 5alpha-androstan-3,17-dione + NADPH + H(+). It carries out the reaction androsterone + NAD(+) = 5alpha-androstan-3,17-dione + NADH + H(+). Inhibited by high concentrations of substrate. Functionally, NADP-dependent 17-alpha-hydroxysteroid dehydrogenase that converts 5-alpha-androstane-3,17-dione into androsterone. Has lower 3-alpha-hydroxysteroid dehydrogenase activity. Has broad substrate specificity and acts on various 17-alpha-hydroxysteroids, 17-ketosteroids, 3-alpha hydroxysteroids and 3-ketosteroids. Reduction of keto groups is strictly stereoselective. Reduction of 17-ketosteroids yields only 17-alpha-hydroxysteroids. Likewise, reduction of 3-ketosteroids yields only 3-alpha-hydroxysteroids. In Mus musculus (Mouse), this protein is Aldo-keto reductase family 1 member C21 (Akr1c21).